Reading from the N-terminus, the 298-residue chain is MQLLKASDIISHLQIDGIFPGGNAIPCTHLNNYMNIKEKQLMNTIADVQSSRDLRNLPINQVGIKDLRFPITLQTAEGIQSTIARLTMTVYLPAEQKGTHMSRFVALMEQYSEALDFAQLHRLTAEMVALLDSRAGKISVSFPFFRKKTAPVSGIQSLLDYDVCLTGEMKDGAYGHSMKVMIPVTSLCPCSKEISQYGAHNQRSHVTVSLTADAEVGIEEVIDYVEAQASCQLYGLLKRPDEKYVTEKAYENPKFVEDMVRDVATSLIADKRIKSFVVESENFESIHNHSAYAYIAYP.

This sequence belongs to the GTP cyclohydrolase IV family.

It catalyses the reaction GTP + H2O = 7,8-dihydroneopterin 3'-triphosphate + formate + H(+). It participates in cofactor biosynthesis; 7,8-dihydroneopterin triphosphate biosynthesis; 7,8-dihydroneopterin triphosphate from GTP: step 1/1. Converts GTP to 7,8-dihydroneopterin triphosphate. In Neisseria meningitidis serogroup C (strain 053442), this protein is GTP cyclohydrolase FolE2.